A 264-amino-acid polypeptide reads, in one-letter code: Phosphonoacetaldehyde hydrolase (264 aa).

Asp-9 serves as the catalytic Nucleophile. Mg(2+) is bound by residues Asp-9 and Ala-11. Lys-50 acts as the Schiff-base intermediate with substrate in catalysis. A Mg(2+)-binding site is contributed by Asp-183.

Belongs to the HAD-like hydrolase superfamily. PhnX family. As to quaternary structure, homodimer. Mg(2+) serves as cofactor.

It catalyses the reaction phosphonoacetaldehyde + H2O = acetaldehyde + phosphate + H(+). Its function is as follows. Involved in phosphonate degradation. This Bacillus cereus (strain ATCC 14579 / DSM 31 / CCUG 7414 / JCM 2152 / NBRC 15305 / NCIMB 9373 / NCTC 2599 / NRRL B-3711) protein is Phosphonoacetaldehyde hydrolase.